Here is a 441-residue protein sequence, read N- to C-terminus: UBX domain-containing protein 6 (441 aa).

Residues 1–10 form a mediates interaction with LMAN1 region; sequence MKKFFQEFKA. The residue at position 2 (K2) is an N-acetylalanine. 2 disordered regions span residues 13 to 79 and 87 to 106; these read KFKS…QDTI and LQAE…NVVS. Residues 22–36 are compositionally biased toward basic and acidic residues; the sequence is KLKESVGEKAHKEKP. Residues 51-63 form a VCP/p97-interacting motif (VIM) region; the sequence is EAQMAAAAALARL. The span at 52-61 shows a compositional bias: low complexity; it reads AQMAAAAALA. S96 carries the phosphoserine modification. In terms of domain architecture, PUB spans 175–244; that stretch reads VDTIAKYLDN…DPEEFYVLSE (70 aa). In terms of domain architecture, UBX spans 332–408; sequence RKYNYTLLRV…GLVPSALLTF (77 aa).

As to quaternary structure, interacts with VCP through the PUB domain (via C-terminus) and VIM motif (via N-terminus); the interaction is direct. Forms a ternary complex with CAV1 and VCP. Interacts with SYVN1. Interacts with HERPUD1. Interacts with VCPKMT. May interact with DERL1. Interacts with PLAA, VCP and YOD1; may form a complex involved in macroautophagy. Interacts with LMAN1. In terms of tissue distribution, enhanced expression in testis.

The protein localises to the cytoplasm. Its subcellular location is the cytosol. The protein resides in the membrane. It is found in the nucleus. It localises to the cytoskeleton. The protein localises to the microtubule organizing center. Its subcellular location is the centrosome. The protein resides in the early endosome membrane. It is found in the late endosome membrane. It localises to the lysosome membrane. May negatively regulate the ATPase activity of VCP, an ATP-driven segregase that associates with different cofactors to control a wide variety of cellular processes. As a cofactor of VCP, it may play a role in the transport of CAV1 to lysosomes for degradation. It may also play a role in endoplasmic reticulum-associated degradation (ERAD) of misfolded proteins. Together with VCP and other cofactors, it may play a role in macroautophagy, regulating for instance the clearance of damaged lysosomes. This chain is UBX domain-containing protein 6, found in Homo sapiens (Human).